The primary structure comprises 457 residues: Bifunctional protein GlmU (457 aa).

The segment at 1–230 (MSKRYAVVLA…FEESLGVNDR (230 aa)) is pyrophosphorylase. UDP-N-acetyl-alpha-D-glucosamine is bound by residues 9–12 (LAAG), lysine 23, glutamine 73, and 78–79 (GT). Aspartate 103 serves as a coordination point for Mg(2+). 4 residues coordinate UDP-N-acetyl-alpha-D-glucosamine: glycine 140, glutamate 155, asparagine 170, and asparagine 228. Asparagine 228 provides a ligand contact to Mg(2+). The linker stretch occupies residues 231–251 (IALAEASRLMQRRINENHMRN). Residues 252 to 457 (GVTLVNPENT…GYAKHLNHGK (206 aa)) form an N-acetyltransferase region. The UDP-N-acetyl-alpha-D-glucosamine site is built by arginine 333 and lysine 351. Histidine 363 functions as the Proton acceptor in the catalytic mechanism. UDP-N-acetyl-alpha-D-glucosamine is bound by residues tyrosine 366 and asparagine 377. Residues 386–387 (NY), alanine 423, and arginine 440 each bind acetyl-CoA.

The protein in the N-terminal section; belongs to the N-acetylglucosamine-1-phosphate uridyltransferase family. This sequence in the C-terminal section; belongs to the transferase hexapeptide repeat family. As to quaternary structure, homotrimer. The cofactor is Mg(2+).

It localises to the cytoplasm. It catalyses the reaction alpha-D-glucosamine 1-phosphate + acetyl-CoA = N-acetyl-alpha-D-glucosamine 1-phosphate + CoA + H(+). The catalysed reaction is N-acetyl-alpha-D-glucosamine 1-phosphate + UTP + H(+) = UDP-N-acetyl-alpha-D-glucosamine + diphosphate. The protein operates within nucleotide-sugar biosynthesis; UDP-N-acetyl-alpha-D-glucosamine biosynthesis; N-acetyl-alpha-D-glucosamine 1-phosphate from alpha-D-glucosamine 6-phosphate (route II): step 2/2. Its pathway is nucleotide-sugar biosynthesis; UDP-N-acetyl-alpha-D-glucosamine biosynthesis; UDP-N-acetyl-alpha-D-glucosamine from N-acetyl-alpha-D-glucosamine 1-phosphate: step 1/1. It participates in bacterial outer membrane biogenesis; LPS lipid A biosynthesis. Functionally, catalyzes the last two sequential reactions in the de novo biosynthetic pathway for UDP-N-acetylglucosamine (UDP-GlcNAc). The C-terminal domain catalyzes the transfer of acetyl group from acetyl coenzyme A to glucosamine-1-phosphate (GlcN-1-P) to produce N-acetylglucosamine-1-phosphate (GlcNAc-1-P), which is converted into UDP-GlcNAc by the transfer of uridine 5-monophosphate (from uridine 5-triphosphate), a reaction catalyzed by the N-terminal domain. The polypeptide is Bifunctional protein GlmU (Listeria monocytogenes serotype 4b (strain F2365)).